The primary structure comprises 871 residues: Alanine--tRNA ligase (871 aa).

Zn(2+) contacts are provided by histidine 561, histidine 565, cysteine 665, and histidine 669.

It belongs to the class-II aminoacyl-tRNA synthetase family. It depends on Zn(2+) as a cofactor.

The protein resides in the cytoplasm. The enzyme catalyses tRNA(Ala) + L-alanine + ATP = L-alanyl-tRNA(Ala) + AMP + diphosphate. Functionally, catalyzes the attachment of alanine to tRNA(Ala) in a two-step reaction: alanine is first activated by ATP to form Ala-AMP and then transferred to the acceptor end of tRNA(Ala). Also edits incorrectly charged Ser-tRNA(Ala) and Gly-tRNA(Ala) via its editing domain. The protein is Alanine--tRNA ligase of Dehalococcoides mccartyi (strain CBDB1).